A 112-amino-acid polypeptide reads, in one-letter code: Transcriptional regulator WhiD (112 aa).

The region spanning 22 to 86 (ACRGVDSSLF…GGLTEDEREE (65 aa)) is the 4Fe-4S Wbl-type domain. Positions 23, 53, 56, and 62 each coordinate [4Fe-4S] cluster.

It belongs to the WhiB family. In terms of assembly, the 4Fe-4S form is a monomer; upon oxidation forms a disulfide-bonded homodimer. Requires [4Fe-4S] cluster as cofactor. Post-translationally, can be nitrosylated by NO, 8 NO react per cluster. These complexes are quite stable under anaerobic conditions, but degrade slowly aerobically. Upon Fe-S cluster removal intramolecular disulfide bonds are formed.

The protein localises to the cytoplasm. Acts as a transcriptional regulator. Probably redox-responsive. The apo- but not holo-form probably binds DNA. Plays a positive role in prespore maturation and the initiation of sporulation septation. The sequence is that of Transcriptional regulator WhiD (whiD) from Streptomyces coelicolor (strain ATCC BAA-471 / A3(2) / M145).